Reading from the N-terminus, the 364-residue chain is Peptide chain release factor 1 (364 aa).

At Q238 the chain carries N5-methylglutamine.

This sequence belongs to the prokaryotic/mitochondrial release factor family. Post-translationally, methylated by PrmC. Methylation increases the termination efficiency of RF1.

It is found in the cytoplasm. Its function is as follows. Peptide chain release factor 1 directs the termination of translation in response to the peptide chain termination codons UAG and UAA. This chain is Peptide chain release factor 1, found in Psychrobacter sp. (strain PRwf-1).